The chain runs to 361 residues: Mitochondrial import receptor subunit TOM40 homolog (361 aa).

The span at 1 to 10 shows a compositional bias: low complexity; sequence MGNVLAASSP. The interval 1 to 71 is disordered; sequence MGNVLAASSP…TASASGAAED (71 aa). The span at 11 to 36 shows a compositional bias: pro residues; sequence PAGPPPPPAPALVGLPPPPPSPPGFT. Low complexity-rich tracts occupy residues 37–52 and 59–71; these read LPPL…STSR and GAAT…AAED.

Belongs to the Tom40 family. In terms of assembly, forms part of the preprotein translocase complex of the outer mitochondrial membrane (TOM complex) which consists of at least 7 different proteins (TOMM5, TOMM6, TOMM7, TOMM20, TOMM22, TOMM40 and TOMM70). Interacts with mitochondrial targeting sequences. Interacts with TIMM29; linking the TIM22 complex to the TOM complex. Forms a complex with BCAP31 (via C-terminus) which mediates the translocation of components of the mitochondrial membrane respiratory chain NADH dehydrogenase (Complex I) from the cytosol to the mitochondria. Interacts (via N-terminus) with CYP1A1 (via mitochondrial targeting signal); this interaction is required for CYP1A1 translocation across the mitochondrial outer membrane.

The protein resides in the mitochondrion outer membrane. In terms of biological role, channel-forming protein essential for import of protein precursors into mitochondria. Plays a role in the assembly of the mitochondrial membrane respiratory chain NADH dehydrogenase (Complex I) by forming a complex with BCAP31 and mediating the translocation of Complex I components from the cytosol to the mitochondria. The chain is Mitochondrial import receptor subunit TOM40 homolog (TOMM40) from Homo sapiens (Human).